Reading from the N-terminus, the 230-residue chain is Urease accessory protein UreG (230 aa).

Position 33-40 (Gly-33–Thr-40) interacts with GTP.

It belongs to the SIMIBI class G3E GTPase family. UreG subfamily. Homodimer. UreD, UreF and UreG form a complex that acts as a GTP-hydrolysis-dependent molecular chaperone, activating the urease apoprotein by helping to assemble the nickel containing metallocenter of UreC. The UreE protein probably delivers the nickel.

Its subcellular location is the cytoplasm. Its function is as follows. Facilitates the functional incorporation of the urease nickel metallocenter. This process requires GTP hydrolysis, probably effectuated by UreG. In Mycobacteroides abscessus (strain ATCC 19977 / DSM 44196 / CCUG 20993 / CIP 104536 / JCM 13569 / NCTC 13031 / TMC 1543 / L948) (Mycobacterium abscessus), this protein is Urease accessory protein UreG.